Here is a 239-residue protein sequence, read N- to C-terminus: 7-cyano-7-deazaguanine synthase (239 aa).

Position 8 to 18 (8 to 18 (LSGGLDSPTVL)) interacts with ATP. The Zn(2+) site is built by Cys188, Cys196, Cys199, and Cys202.

This sequence belongs to the QueC family. Zn(2+) serves as cofactor.

The catalysed reaction is 7-carboxy-7-deazaguanine + NH4(+) + ATP = 7-cyano-7-deazaguanine + ADP + phosphate + H2O + H(+). It participates in purine metabolism; 7-cyano-7-deazaguanine biosynthesis. Its function is as follows. Catalyzes the ATP-dependent conversion of 7-carboxy-7-deazaguanine (CDG) to 7-cyano-7-deazaguanine (preQ(0)). In Picrophilus torridus (strain ATCC 700027 / DSM 9790 / JCM 10055 / NBRC 100828 / KAW 2/3), this protein is 7-cyano-7-deazaguanine synthase.